The chain runs to 109 residues: MFGKGGMGNLMKQAQQMQDKMAKVQEEIARMEVTGEAGAGLVKVTMTGSHSVRKVDIDASLLEDDKEMLEDLIAAACNDAARRVEENQKDKMAEVTGGMQLPPGMKMPF.

The segment at 88 to 109 is disordered; it reads QKDKMAEVTGGMQLPPGMKMPF.

It belongs to the YbaB/EbfC family. Homodimer.

It localises to the cytoplasm. The protein localises to the nucleoid. In terms of biological role, binds to DNA and alters its conformation. May be involved in regulation of gene expression, nucleoid organization and DNA protection. The sequence is that of Nucleoid-associated protein swp_1717 from Shewanella piezotolerans (strain WP3 / JCM 13877).